The sequence spans 212 residues: Protein-L-isoaspartate O-methyltransferase (212 aa).

Serine 60 is a catalytic residue.

The protein belongs to the methyltransferase superfamily. L-isoaspartyl/D-aspartyl protein methyltransferase family.

The protein localises to the cytoplasm. The catalysed reaction is [protein]-L-isoaspartate + S-adenosyl-L-methionine = [protein]-L-isoaspartate alpha-methyl ester + S-adenosyl-L-homocysteine. In terms of biological role, catalyzes the methyl esterification of L-isoaspartyl residues in peptides and proteins that result from spontaneous decomposition of normal L-aspartyl and L-asparaginyl residues. It plays a role in the repair and/or degradation of damaged proteins. This chain is Protein-L-isoaspartate O-methyltransferase, found in Pseudomonas entomophila (strain L48).